The chain runs to 465 residues: Probable multidrug resistance protein NorM (465 aa).

A run of 10 helical transmembrane segments spans residues 50–72 (MAAI…GLLL), 92–114 (HQVR…LIYH), 127–149 (HLAQ…YLLL), 164–186 (PAMI…FIYG), 193–215 (FGAV…LMIS), 248–270 (GLPI…LLLS), 283–305 (ALNT…TILV), 320–342 (ISYV…TVVL), 393–412 (ILYI…GYIL), and 422–444 (MGPT…LLFY).

Belongs to the multi antimicrobial extrusion (MATE) (TC 2.A.66.1) family.

It localises to the cell inner membrane. Functionally, multidrug efflux pump. The chain is Probable multidrug resistance protein NorM (norM) from Mannheimia succiniciproducens (strain KCTC 0769BP / MBEL55E).